Consider the following 438-residue polypeptide: Histidinol dehydrogenase (438 aa).

NAD(+) contacts are provided by Tyr137, Gln198, and Asn221. Substrate is bound by residues Ser244, Gln266, and His269. 2 residues coordinate Zn(2+): Gln266 and His269. Catalysis depends on proton acceptor residues Glu334 and His335. Residues His335, Asp368, Glu422, and His427 each contribute to the substrate site. Position 368 (Asp368) interacts with Zn(2+). A Zn(2+)-binding site is contributed by His427.

Belongs to the histidinol dehydrogenase family. Zn(2+) serves as cofactor.

The enzyme catalyses L-histidinol + 2 NAD(+) + H2O = L-histidine + 2 NADH + 3 H(+). It functions in the pathway amino-acid biosynthesis; L-histidine biosynthesis; L-histidine from 5-phospho-alpha-D-ribose 1-diphosphate: step 9/9. In terms of biological role, catalyzes the sequential NAD-dependent oxidations of L-histidinol to L-histidinaldehyde and then to L-histidine. The protein is Histidinol dehydrogenase of Aromatoleum aromaticum (strain DSM 19018 / LMG 30748 / EbN1) (Azoarcus sp. (strain EbN1)).